The following is a 356-amino-acid chain: S-adenosylmethionine:tRNA ribosyltransferase-isomerase (356 aa).

Belongs to the QueA family. As to quaternary structure, monomer.

Its subcellular location is the cytoplasm. It carries out the reaction 7-aminomethyl-7-carbaguanosine(34) in tRNA + S-adenosyl-L-methionine = epoxyqueuosine(34) in tRNA + adenine + L-methionine + 2 H(+). Its pathway is tRNA modification; tRNA-queuosine biosynthesis. Transfers and isomerizes the ribose moiety from AdoMet to the 7-aminomethyl group of 7-deazaguanine (preQ1-tRNA) to give epoxyqueuosine (oQ-tRNA). The sequence is that of S-adenosylmethionine:tRNA ribosyltransferase-isomerase from Escherichia coli O6:K15:H31 (strain 536 / UPEC).